Here is a 718-residue protein sequence, read N- to C-terminus: Polyribonucleotide nucleotidyltransferase (718 aa).

2 residues coordinate Mg(2+): Asp-506 and Asp-512. Positions 572-632 constitute a KH domain; it reads PKLELFSVDP…EQIKAAKDYI (61 aa). The S1 motif domain maps to 657–718; sequence GQEFQGIVKK…NGKISVDLCE (62 aa).

This sequence belongs to the polyribonucleotide nucleotidyltransferase family. Requires Mg(2+) as cofactor.

Its subcellular location is the cytoplasm. It carries out the reaction RNA(n+1) + phosphate = RNA(n) + a ribonucleoside 5'-diphosphate. In terms of biological role, involved in mRNA degradation. Catalyzes the phosphorolysis of single-stranded polyribonucleotides processively in the 3'- to 5'-direction. This chain is Polyribonucleotide nucleotidyltransferase, found in Campylobacter jejuni subsp. doylei (strain ATCC BAA-1458 / RM4099 / 269.97).